Consider the following 774-residue polypeptide: Formin-like protein 13 (774 aa).

The signal sequence occupies residues 1–22; sequence MRRRVALSTAIALLVGAQLCVA. Pro residues predominate over residues 51–67; the sequence is PPPPMSGSEAVPPPPPA. A disordered region spans residues 51 to 78; sequence PPPPMSGSEAVPPPPPAAAASATTGGGR. Over residues 68–78 the composition is skewed to low complexity; sequence AAASATTGGGR. Residues 89-109 form a helical membrane-spanning segment; sequence IALSAGLVALAVASYSCCLLL. Disordered stretches follow at residues 130-163, 176-338, 374-402, and 740-774; these read AAAA…DAIY, HEKS…HLKP, FLNS…RRLL, and GSGK…SSSS. Pro residues predominate over residues 194-216; that stretch reads DLRPLPPLKRPESQPPPPPPSTP. Positions 242 to 261 are enriched in low complexity; the sequence is SSFSRSTSQHSTLEQTAMPP. Residues 262–286 show a composition bias toward pro residues; the sequence is MAAPAPPQTNPPRPVRPPPPPPPPR. The FH2 domain occupies 326 to 749; the sequence is GAARPPKPPH…GSGKSFRVPA (424 aa).

This sequence belongs to the formin-like family. Class-I subfamily.

It localises to the membrane. This Oryza sativa subsp. japonica (Rice) protein is Formin-like protein 13 (FH13).